The following is a 49-amino-acid chain: Large ribosomal subunit protein bL33 (49 aa).

This sequence belongs to the bacterial ribosomal protein bL33 family.

The polypeptide is Large ribosomal subunit protein bL33 (Moorella thermoacetica (strain ATCC 39073 / JCM 9320)).